The primary structure comprises 273 residues: Glutamate racemase (273 aa).

Substrate-binding positions include 7–8 (DS) and 39–40 (YG). The active-site Proton donor/acceptor is cysteine 70. Position 71–72 (71–72 (NT)) interacts with substrate. Cysteine 194 serves as the catalytic Proton donor/acceptor. 195–196 (TH) contacts substrate.

This sequence belongs to the aspartate/glutamate racemases family.

The enzyme catalyses L-glutamate = D-glutamate. The protein operates within cell wall biogenesis; peptidoglycan biosynthesis. In terms of biological role, provides the (R)-glutamate required for cell wall biosynthesis. This Dinoroseobacter shibae (strain DSM 16493 / NCIMB 14021 / DFL 12) protein is Glutamate racemase.